A 364-amino-acid chain; its full sequence is Protein RecA (364 aa).

ATP is bound at residue 77 to 84 (GPESSGKT). The disordered stretch occupies residues 343 to 364 (DRFLQNGGPDPDDGDGDATAEM). Residues 352–364 (DPDDGDGDATAEM) are compositionally biased toward acidic residues.

This sequence belongs to the RecA family.

The protein resides in the cytoplasm. Can catalyze the hydrolysis of ATP in the presence of single-stranded DNA, the ATP-dependent uptake of single-stranded DNA by duplex DNA, and the ATP-dependent hybridization of homologous single-stranded DNAs. It interacts with LexA causing its activation and leading to its autocatalytic cleavage. This Rhizobium johnstonii (strain DSM 114642 / LMG 32736 / 3841) (Rhizobium leguminosarum bv. viciae) protein is Protein RecA.